A 701-amino-acid polypeptide reads, in one-letter code: Peptide transporter 3 (701 aa).

9 consecutive transmembrane segments (helical) span residues Phe29–Ser49, Phe55–Ala75, Ile91–Ile111, Gly119–Ala139, Phe154–Ile174, Phe188–Met208, Gly269–Gln289, Ile318–Leu338, and Ala351–Val371. N-linked (GlcNAc...) asparagine glycans are attached at residues Asn391 and Asn432. Transmembrane regions (helical) follow at residues Ile575–Thr595, Val611–Ser631, and Leu641–Ala661.

Belongs to the major facilitator superfamily. Proton-dependent oligopeptide transporter (POT/PTR) (TC 2.A.17) family. Expressed in the AVA interneuron.

The protein localises to the membrane. In terms of biological role, neuron-specific, H(+)-coupled oligopeptide transporter with broad specificity towards di- and tripeptides in a Na(+) and Cl(-)-independent manner. Shows H(+) channel activity in the absence of peptide substrates. In Caenorhabditis elegans, this protein is Peptide transporter 3 (pept-3).